A 417-amino-acid chain; its full sequence is Serine hydroxymethyltransferase (417 aa).

(6S)-5,6,7,8-tetrahydrofolate contacts are provided by residues Leu121 and 125–127; that span reads GHL. N6-(pyridoxal phosphate)lysine is present on Lys229. 355-357 serves as a coordination point for (6S)-5,6,7,8-tetrahydrofolate; sequence SPF.

This sequence belongs to the SHMT family. Homodimer. Requires pyridoxal 5'-phosphate as cofactor.

The protein localises to the cytoplasm. The catalysed reaction is (6R)-5,10-methylene-5,6,7,8-tetrahydrofolate + glycine + H2O = (6S)-5,6,7,8-tetrahydrofolate + L-serine. The protein operates within one-carbon metabolism; tetrahydrofolate interconversion. Its pathway is amino-acid biosynthesis; glycine biosynthesis; glycine from L-serine: step 1/1. Functionally, catalyzes the reversible interconversion of serine and glycine with tetrahydrofolate (THF) serving as the one-carbon carrier. This reaction serves as the major source of one-carbon groups required for the biosynthesis of purines, thymidylate, methionine, and other important biomolecules. Also exhibits THF-independent aldolase activity toward beta-hydroxyamino acids, producing glycine and aldehydes, via a retro-aldol mechanism. This chain is Serine hydroxymethyltransferase, found in Xanthomonas oryzae pv. oryzae (strain MAFF 311018).